We begin with the raw amino-acid sequence, 429 residues long: Glutamyl-tRNA reductase (429 aa).

Residues 49–52 (TCNR), serine 108, 113–115 (EAQ), and glutamine 119 each bind substrate. The Nucleophile role is filled by cysteine 50. Position 188 to 193 (188 to 193 (GAGEMS)) interacts with NADP(+).

The protein belongs to the glutamyl-tRNA reductase family. Homodimer.

It carries out the reaction (S)-4-amino-5-oxopentanoate + tRNA(Glu) + NADP(+) = L-glutamyl-tRNA(Glu) + NADPH + H(+). Its pathway is porphyrin-containing compound metabolism; protoporphyrin-IX biosynthesis; 5-aminolevulinate from L-glutamyl-tRNA(Glu): step 1/2. Functionally, catalyzes the NADPH-dependent reduction of glutamyl-tRNA(Glu) to glutamate 1-semialdehyde (GSA). This is Glutamyl-tRNA reductase from Rubrobacter xylanophilus (strain DSM 9941 / JCM 11954 / NBRC 16129 / PRD-1).